Consider the following 65-residue polypeptide: Defensin-B2 (65 aa).

Residues 1–23 (MEARVLLLCAVLFLLVHTPPAAG) form the signal peptide. 3 disulfide bridges follow: Cys-29-Cys-56, Cys-36-Cys-50, and Cys-40-Cys-57.

It belongs to the beta-defensin family. As to expression, lowly expressed in spleen, and lung.

The protein resides in the secreted. Has antimicrobial activity. This is Defensin-B2 from Ornithorhynchus anatinus (Duckbill platypus).